A 295-amino-acid chain; its full sequence is Proline iminopeptidase (295 aa).

An AB hydrolase-1 domain is found at 35 to 279; the sequence is TLHGGPGMSH…ACSHLTMWED (245 aa). The Nucleophile role is filled by S107. Residue D246 is part of the active site. Catalysis depends on H273, which acts as the Proton donor.

This sequence belongs to the peptidase S33 family. Part of the tricorn proteolytic complex.

It catalyses the reaction Release of N-terminal proline from a peptide.. In terms of biological role, cleaves H-Pro-AMC as well as a wide spectrum of amino acid substrates and several peptide substrates without a proline at the N-terminus. In conjunction with the three factors F1, F2 and F3, Tricorn degrades oligopeptides in a sequential manner, yielding free amino acids. This chain is Proline iminopeptidase (pip), found in Thermoplasma volcanium (strain ATCC 51530 / DSM 4299 / JCM 9571 / NBRC 15438 / GSS1).